The following is a 633-amino-acid chain: Pesticidal crystal protein Cry2Aa (633 aa).

The protein belongs to the delta endotoxin family.

Promotes colloidosmotic lysis by binding to the midgut epithelial cells of both dipteran (Aedes aegypti) and lepidopteran (Manduca sexta) larvae. The polypeptide is Pesticidal crystal protein Cry2Aa (cry2Aa) (Bacillus thuringiensis subsp. kenyae).